A 435-amino-acid chain; its full sequence is MEGQTPGSRGLPEKPHPATAAATLSSMGAVFILMKSALGAGLLNFPWAFSKAGGVVPAFLVELVSLVFLISGLVILGYAAAVSGQATYQGVVRGLCGPAIGKLCEACFLLNLLMISVAFLRVIGDQLEKLCDSLLSGTPPAPQPWYADQRFTLPLLSVLVILPLSAPREIAFQKYTSILGTLAACYLALVITVQYYLWPQGLVRESHPSLSPASWTSVFSVFPTICFGFQCHEAAVSIYCSMRKRSLSHWALVSVLSLLACCLIYSLTGVYGFLTFGTEVSADVLMSYPGNDMVIIVARVLFAVSIVTVYPIVLFLGRSVMQDFWRRSCLGGWGPSALADPSGLWVRMPLTILWVTVTLAMALFMPDLSEIVSIIGGISSFFIFIFPGLCLICAMGVEPIGPRVKCCLEVWGVVSVLVGTFIFGQSTAAAVWEMF.

A run of 11 helical transmembrane segments spans residues 29 to 49 (AVFI…PWAF), 55 to 75 (VVPA…GLVI), 100 to 120 (IGKL…VAFL), 151 to 171 (FTLP…REIA), 178 to 198 (ILGT…YYLW), 218 to 240 (VFSV…SIYC), 250 to 270 (WALV…LTGV), 295 to 315 (IIVA…IVLF), 348 to 368 (MPLT…MPDL), 374 to 394 (IIGG…LICA), and 410 to 430 (VWGV…TAAA).

It belongs to the amino acid/polyamine transporter 2 family. In terms of tissue distribution, expressed in fetal and adult brain, and spinal cord. In the brain, it is localized in the cell body and axon of the majority of neuronal cells and in a subset of glial cells. Found throughout the neuronal retina, with higher expression levels in the inner and outer plexiform layers and the photoreceptor layer. Very weak expression is also present in the kidneys, thymus, and testes.

It is found in the membrane. The protein resides in the cytoplasm. It localises to the cell cortex. Its subcellular location is the cell projection. The protein localises to the axon. It carries out the reaction L-glutamine(out) = L-glutamine(in). The catalysed reaction is L-alanine(in) = L-alanine(out). The enzyme catalyses L-histidine(out) = L-histidine(in). It catalyses the reaction L-aspartate(out) = L-aspartate(in). It carries out the reaction L-arginine(in) = L-arginine(out). The catalysed reaction is L-leucine(in) = L-leucine(out). Functionally, electrogenic sodium-dependent amino acid transporter with a preference for L-glutamine, L-alanine, L-histidine, L-aspartate and L-arginine. May facilitate glutamine uptake in both excitatory and inhibitory neurons. The transport mechanism and stoichiometry remain to be elucidated. The sequence is that of Solute carrier family 38 member 8 from Homo sapiens (Human).